The following is a 468-amino-acid chain: 6-phospho-beta-galactosidase (468 aa).

D-galactose 6-phosphate-binding residues include glutamine 19, histidine 116, asparagine 159, glutamate 160, and asparagine 297. Glutamate 160 serves as the catalytic Proton donor. Catalysis depends on glutamate 375, which acts as the Nucleophile. 4 residues coordinate D-galactose 6-phosphate: serine 428, tryptophan 429, lysine 435, and tyrosine 437.

This sequence belongs to the glycosyl hydrolase 1 family.

The enzyme catalyses a 6-phospho-beta-D-galactoside + H2O = D-galactose 6-phosphate + an alcohol. Its pathway is carbohydrate metabolism; lactose degradation; D-galactose 6-phosphate and beta-D-glucose from lactose 6-phosphate: step 1/1. The protein is 6-phospho-beta-galactosidase of Streptococcus pyogenes serotype M4 (strain MGAS10750).